The following is a 524-amino-acid chain: Keratin, type II cytoskeletal 72 (524 aa).

The segment at 1–136 is head; that stretch reads MSRQLNLYPG…DPEIQKVRAQ (136 aa). The tract at residues 137–172 is coil 1A; that stretch reads EREQIKALNNKFASFIDKVRFLEQQNQVLGTKWELL. One can recognise an IF rod domain in the interval 137–450; sequence EREQIKALNN…KLLEGEECRM (314 aa). Residues 173–191 form a linker 1 region; that stretch reads QQLDLNNCKNNLEPILEGY. Residues 192–283 are coil 1B; the sequence is TSNLRKQLEM…CLYEGEIAQL (92 aa). Residues 284–307 form a linker 12 region; it reads QSHISDTSVILSMDNNRDLDLDSI. The coil 2 stretch occupies residues 308–446; the sequence is IAQVRAQYEE…ATYRKLLEGE (139 aa). The segment at 447 to 524 is tail; sequence ECRMSGEYPN…SSCATKKASR (78 aa). Residues 495 to 524 form a disordered region; sequence KTKGSCGGSELKDAPAKTSGSSCATKKASR.

It belongs to the intermediate filament family. In terms of assembly, heterotetramer of two type I and two type II keratins.

Has a role in hair formation. Specific component of keratin intermediate filaments in the inner root sheath (IRS) of the hair follicle. The chain is Keratin, type II cytoskeletal 72 (KRT72) from Bos taurus (Bovine).